We begin with the raw amino-acid sequence, 77 residues long: Exodeoxyribonuclease 7 small subunit (77 aa).

It belongs to the XseB family. In terms of assembly, heterooligomer composed of large and small subunits.

The protein resides in the cytoplasm. It carries out the reaction Exonucleolytic cleavage in either 5'- to 3'- or 3'- to 5'-direction to yield nucleoside 5'-phosphates.. In terms of biological role, bidirectionally degrades single-stranded DNA into large acid-insoluble oligonucleotides, which are then degraded further into small acid-soluble oligonucleotides. The chain is Exodeoxyribonuclease 7 small subunit from Chromobacterium violaceum (strain ATCC 12472 / DSM 30191 / JCM 1249 / CCUG 213 / NBRC 12614 / NCIMB 9131 / NCTC 9757 / MK).